The chain runs to 421 residues: Ribulose bisphosphate carboxylase large chain (421 aa).

Substrate contacts are provided by Asn68 and Thr118. The Proton acceptor role is filled by Lys120. Position 122 (Lys122) interacts with substrate. 3 residues coordinate Mg(2+): Lys146, Asp148, and Glu149. Position 146 is an N6-carboxylysine (Lys146). The Proton acceptor role is filled by His239. Positions 240, 272, and 324 each coordinate substrate.

The protein belongs to the RuBisCO large chain family. Type I subfamily. In terms of assembly, heterohexadecamer of 8 large chains and 8 small chains; disulfide-linked. The disulfide link is formed within the large subunit homodimers. The cofactor is Mg(2+). Post-translationally, the disulfide bond which can form in the large chain dimeric partners within the hexadecamer appears to be associated with oxidative stress and protein turnover.

It localises to the plastid. The protein resides in the chloroplast. The catalysed reaction is 2 (2R)-3-phosphoglycerate + 2 H(+) = D-ribulose 1,5-bisphosphate + CO2 + H2O. It catalyses the reaction D-ribulose 1,5-bisphosphate + O2 = 2-phosphoglycolate + (2R)-3-phosphoglycerate + 2 H(+). In terms of biological role, ruBisCO catalyzes two reactions: the carboxylation of D-ribulose 1,5-bisphosphate, the primary event in carbon dioxide fixation, as well as the oxidative fragmentation of the pentose substrate in the photorespiration process. Both reactions occur simultaneously and in competition at the same active site. This chain is Ribulose bisphosphate carboxylase large chain (rbcL), found in Aegilops tauschii (Tausch's goatgrass).